The primary structure comprises 243 residues: Small ribosomal subunit protein uS5 (243 aa).

The interval 1–54 is disordered; that stretch reads MSDNEKETQVAEETQNTQATAESSNNDERRGRRNNRGGEGRRGDRRGRREDNHE. Positions 11–24 are enriched in polar residues; it reads AEETQNTQATAESS. Over residues 26–54 the composition is skewed to basic and acidic residues; the sequence is NDERRGRRNNRGGEGRRGDRRGRREDNHE. The S5 DRBM domain occupies 57–120; sequence MLDRVVTINR…LDAKKHLFNV (64 aa).

Belongs to the universal ribosomal protein uS5 family. In terms of assembly, part of the 30S ribosomal subunit. Contacts proteins S4 and S8.

Its function is as follows. With S4 and S12 plays an important role in translational accuracy. Functionally, located at the back of the 30S subunit body where it stabilizes the conformation of the head with respect to the body. The chain is Small ribosomal subunit protein uS5 from Bifidobacterium animalis subsp. lactis (strain AD011).